The sequence spans 333 residues: UPF0284 protein VNG_1572C (333 aa).

This sequence belongs to the UPF0284 family.

The polypeptide is UPF0284 protein VNG_1572C (Halobacterium salinarum (strain ATCC 700922 / JCM 11081 / NRC-1) (Halobacterium halobium)).